Reading from the N-terminus, the 337-residue chain is MAELHHSEHIPQWKKDEIEEIKSLIESYPLFGVIGIEGIPAKQLQSMRRDLKDFAVLKVCRNSLTRRALDQSSDDVKKMDDYIDVQTALIFTKQNPFKLYKLLEKSKTPSPIKAGMVATSDIIVEKGPTSFPPGPILGDMQGAGIPAAIDGGKVVIKETKAVAKAGEVVSQKLAAMLTRLEIYPLEVGLDLRAVLEEGSIFTPDVLAIDEEQIFSNFVQAAQQAFNMSVNAAYPTAMNINTLLAKAASDSRNVAVNATVYEPGIMDILLGKAYSKMMAIASAASSNDDALDDELKEALGAASSAVSAVEEVVEEQEEVKEEEEEESDMASGLGALFG.

A disordered region spans residues 309–337; that stretch reads EEVVEEQEEVKEEEEEESDMASGLGALFG. Acidic residues predominate over residues 310-327; sequence EVVEEQEEVKEEEEEESD.

The protein belongs to the universal ribosomal protein uL10 family. In terms of assembly, part of the 50S ribosomal subunit. Forms part of the ribosomal stalk which helps the ribosome interact with GTP-bound translation factors. Forms a heptameric L10(L12)2(L12)2(L12)2 complex, where L10 forms an elongated spine to which the L12 dimers bind in a sequential fashion.

Forms part of the ribosomal stalk, playing a central role in the interaction of the ribosome with GTP-bound translation factors. The polypeptide is Large ribosomal subunit protein uL10 (Methanococcoides burtonii (strain DSM 6242 / NBRC 107633 / OCM 468 / ACE-M)).